Here is a 692-residue protein sequence, read N- to C-terminus: Tripartite terminase subunit 1 (692 aa).

The C3H1-type zinc finger occupies 190 to 218; sequence CYLCYEELQMTPNNGSSVQKRLNGVLCEH. 634–641 lines the ATP pocket; the sequence is YNELYGQR.

It belongs to the herpesviridae TRM1 protein family. Associates with TRM2 and TRM3 to form the tripartite terminase complex. Interacts with portal protein.

The protein resides in the host nucleus. Component of the molecular motor that translocates viral genomic DNA in empty capsid during DNA packaging. Forms a tripartite terminase complex together with TRM2 and TRM3 in the host cytoplasm. Once the complex reaches the host nucleus, it interacts with the capsid portal vertex. This portal forms a ring in which genomic DNA is translocated into the capsid. TRM1 carries an endonuclease activity that plays an important role for the cleavage of concatemeric viral DNA into unit length genomes. In Elephas maximus (Indian elephant), this protein is Tripartite terminase subunit 1.